A 109-amino-acid chain; its full sequence is Fluoride-specific ion channel FluC (109 aa).

3 consecutive transmembrane segments (helical) span residues 21–41 (LTLNNNFFISIIGSFLVGFFV), 52–72 (ILFSGFFSCFTSFSGFIYFLY), and 84–104 (IIFFNLIIILNLLTMIFGFWI).

This sequence belongs to the fluoride channel Fluc/FEX (TC 1.A.43) family.

The protein resides in the cell inner membrane. The enzyme catalyses fluoride(in) = fluoride(out). Fluoride-specific ion channel. Important for reducing fluoride concentration in the cell, thus reducing its toxicity. The protein is Fluoride-specific ion channel FluC of Prochlorococcus marinus (strain MIT 9301).